We begin with the raw amino-acid sequence, 281 residues long: Pantothenate synthetase (281 aa).

30 to 37 is a binding site for ATP; it reads MGYLHEGH. H37 (proton donor) is an active-site residue. Q60 contacts (R)-pantoate. A beta-alanine-binding site is contributed by Q60. An ATP-binding site is contributed by 146–149; that stretch reads GEKD. Residue Q152 participates in (R)-pantoate binding. ATP-binding positions include I175 and 183-186; that span reads KSSR.

Belongs to the pantothenate synthetase family. As to quaternary structure, homodimer.

Its subcellular location is the cytoplasm. It carries out the reaction (R)-pantoate + beta-alanine + ATP = (R)-pantothenate + AMP + diphosphate + H(+). Its pathway is cofactor biosynthesis; (R)-pantothenate biosynthesis; (R)-pantothenate from (R)-pantoate and beta-alanine: step 1/1. Functionally, catalyzes the condensation of pantoate with beta-alanine in an ATP-dependent reaction via a pantoyl-adenylate intermediate. The protein is Pantothenate synthetase of Ruminiclostridium cellulolyticum (strain ATCC 35319 / DSM 5812 / JCM 6584 / H10) (Clostridium cellulolyticum).